We begin with the raw amino-acid sequence, 520 residues long: 2-isopropylmalate synthase (520 aa).

The Pyruvate carboxyltransferase domain occupies 12 to 274 (VIIFDTTLRD…WNKIDTTQLT (263 aa)). Mn(2+) is bound by residues Asp-21, His-209, His-211, and Asn-245. Residues 398–520 (KLTSLTVIAG…RDTVTTAAAS (123 aa)) are regulatory domain.

Belongs to the alpha-IPM synthase/homocitrate synthase family. LeuA type 1 subfamily. In terms of assembly, homodimer. Mn(2+) serves as cofactor.

The protein resides in the cytoplasm. It carries out the reaction 3-methyl-2-oxobutanoate + acetyl-CoA + H2O = (2S)-2-isopropylmalate + CoA + H(+). The protein operates within amino-acid biosynthesis; L-leucine biosynthesis; L-leucine from 3-methyl-2-oxobutanoate: step 1/4. Catalyzes the condensation of the acetyl group of acetyl-CoA with 3-methyl-2-oxobutanoate (2-ketoisovalerate) to form 3-carboxy-3-hydroxy-4-methylpentanoate (2-isopropylmalate). The chain is 2-isopropylmalate synthase from Bradyrhizobium diazoefficiens (strain JCM 10833 / BCRC 13528 / IAM 13628 / NBRC 14792 / USDA 110).